Here is a 524-residue protein sequence, read N- to C-terminus: uncharacterized protein (524 aa).

Residues 83 to 101 are compositionally biased toward polar residues; sequence NSTPSKQAKPLQRNSPYQG. Disordered regions lie at residues 83 to 108 and 155 to 179; these read NSTP…SENQ and PPCN…KRPR.

It is found in the cytoplasm. This is an uncharacterized protein from Saccharomyces cerevisiae (strain ATCC 204508 / S288c) (Baker's yeast).